The following is a 546-amino-acid chain: Phosphomethylpyrimidine synthase (546 aa).

Substrate contacts are provided by residues asparagine 145, methionine 174, tyrosine 203, histidine 239, 259 to 261 (SRG), 300 to 303 (DGLR), and glutamate 339. Zn(2+) is bound at residue histidine 343. Residue tyrosine 366 participates in substrate binding. Histidine 407 contributes to the Zn(2+) binding site. [4Fe-4S] cluster is bound by residues cysteine 487, cysteine 490, and cysteine 495.

It belongs to the ThiC family. Requires [4Fe-4S] cluster as cofactor.

The catalysed reaction is 5-amino-1-(5-phospho-beta-D-ribosyl)imidazole + S-adenosyl-L-methionine = 4-amino-2-methyl-5-(phosphooxymethyl)pyrimidine + CO + 5'-deoxyadenosine + formate + L-methionine + 3 H(+). It participates in cofactor biosynthesis; thiamine diphosphate biosynthesis. Catalyzes the synthesis of the hydroxymethylpyrimidine phosphate (HMP-P) moiety of thiamine from aminoimidazole ribotide (AIR) in a radical S-adenosyl-L-methionine (SAM)-dependent reaction. This Mycobacterium marinum (strain ATCC BAA-535 / M) protein is Phosphomethylpyrimidine synthase.